Consider the following 458-residue polypeptide: Na(+)/H(+) antiporter NhaA (458 aa).

Transmembrane regions (helical) follow at residues 27–47 (FLHV…AALI), 78–98 (LHFW…GMEI), 114–134 (ILPI…YLSF), 143–163 (GWAV…ALLG), 172–192 (VILL…IAFF), 201–221 (GLAI…IGLA), 222–242 (SAWL…ITGV), 249–269 (VILG…PLTI), 316–336 (PWVA…VSFA), 346–366 (FLVV…GIIT), 388–408 (ILLI…VSML), and 421–441 (IGVL…GLIY).

The protein belongs to the NhaA Na(+)/H(+) (TC 2.A.33) antiporter family.

It is found in the cell inner membrane. The catalysed reaction is Na(+)(in) + 2 H(+)(out) = Na(+)(out) + 2 H(+)(in). Na(+)/H(+) antiporter that extrudes sodium in exchange for external protons. The polypeptide is Na(+)/H(+) antiporter NhaA (Bartonella quintana (strain Toulouse) (Rochalimaea quintana)).